The primary structure comprises 426 residues: Adenylosuccinate synthetase (426 aa).

GTP contacts are provided by residues 11–17 (GDEGKGK) and 39–41 (GHT). The active-site Proton acceptor is aspartate 12. Positions 12 and 39 each coordinate Mg(2+). IMP contacts are provided by residues 12 to 15 (DEGK), 37 to 40 (NAGH), threonine 130, arginine 144, asparagine 226, threonine 241, and arginine 305. Catalysis depends on histidine 40, which acts as the Proton donor. 301–307 (VTTGRKR) contributes to the substrate binding site. GTP contacts are provided by residues arginine 307, 333-335 (KLD), and 415-417 (GTG).

This sequence belongs to the adenylosuccinate synthetase family. Homodimer. The cofactor is Mg(2+).

Its subcellular location is the cytoplasm. The catalysed reaction is IMP + L-aspartate + GTP = N(6)-(1,2-dicarboxyethyl)-AMP + GDP + phosphate + 2 H(+). The protein operates within purine metabolism; AMP biosynthesis via de novo pathway; AMP from IMP: step 1/2. Functionally, plays an important role in the de novo pathway and in the salvage pathway of purine nucleotide biosynthesis. Catalyzes the first committed step in the biosynthesis of AMP from IMP. The chain is Adenylosuccinate synthetase from Meyerozyma guilliermondii (strain ATCC 6260 / CBS 566 / DSM 6381 / JCM 1539 / NBRC 10279 / NRRL Y-324) (Yeast).